Reading from the N-terminus, the 279-residue chain is Putative pyruvate, phosphate dikinase regulatory protein (279 aa).

153 to 160 (GISRTSKT) is a binding site for ADP.

This sequence belongs to the pyruvate, phosphate/water dikinase regulatory protein family. PDRP subfamily.

It carries out the reaction N(tele)-phospho-L-histidyl/L-threonyl-[pyruvate, phosphate dikinase] + ADP = N(tele)-phospho-L-histidyl/O-phospho-L-threonyl-[pyruvate, phosphate dikinase] + AMP + H(+). The enzyme catalyses N(tele)-phospho-L-histidyl/O-phospho-L-threonyl-[pyruvate, phosphate dikinase] + phosphate + H(+) = N(tele)-phospho-L-histidyl/L-threonyl-[pyruvate, phosphate dikinase] + diphosphate. Its function is as follows. Bifunctional serine/threonine kinase and phosphorylase involved in the regulation of the pyruvate, phosphate dikinase (PPDK) by catalyzing its phosphorylation/dephosphorylation. The chain is Putative pyruvate, phosphate dikinase regulatory protein from Bartonella bacilliformis (strain ATCC 35685 / KC583 / Herrer 020/F12,63).